We begin with the raw amino-acid sequence, 156 residues long: Perlucin-like protein (156 aa).

An N-terminal signal peptide occupies residues methionine 1–glycine 22. Cystine bridges form between cysteine 30–cysteine 41, cysteine 58–cysteine 156, and cysteine 131–cysteine 147. The region spanning tyrosine 37–cysteine 156 is the C-type lectin domain.

Component of the organic matrix of calcified shell layers like nacre and prisms.

The protein localises to the secreted. The protein is Perlucin-like protein of Mytilus galloprovincialis (Mediterranean mussel).